A 323-amino-acid chain; its full sequence is Ribonuclease Z (323 aa).

His62, His64, Asp66, His67, His144, Asp215, and His273 together coordinate Zn(2+). Asp66 functions as the Proton acceptor in the catalytic mechanism.

It belongs to the RNase Z family. As to quaternary structure, homodimer. The cofactor is Zn(2+).

It carries out the reaction Endonucleolytic cleavage of RNA, removing extra 3' nucleotides from tRNA precursor, generating 3' termini of tRNAs. A 3'-hydroxy group is left at the tRNA terminus and a 5'-phosphoryl group is left at the trailer molecule.. In terms of biological role, zinc phosphodiesterase, which displays some tRNA 3'-processing endonuclease activity. Probably involved in tRNA maturation, by removing a 3'-trailer from precursor tRNA. The protein is Ribonuclease Z of Synechococcus sp. (strain WH7803).